Reading from the N-terminus, the 731-residue chain is Beta-galactosidase (731 aa).

The signal sequence occupies residues 1 to 23 (MGVGIQTMWSILLLFSCIFSAAS). E182 (proton donor) is an active-site residue. E251 serves as the catalytic Nucleophile. N-linked (GlcNAc...) asparagine glycosylation occurs at N459.

This sequence belongs to the glycosyl hydrolase 35 family.

Its subcellular location is the secreted. It is found in the extracellular space. It localises to the apoplast. The enzyme catalyses Hydrolysis of terminal non-reducing beta-D-galactose residues in beta-D-galactosides.. In terms of biological role, involved in cell wall degradation. Degrades polysaccharides containing beta-(1--&gt;4)-linked galactans, acting as an exo-(1--&gt;4)-beta-D-galactanase. This Malus domestica (Apple) protein is Beta-galactosidase.